The sequence spans 546 residues: 2-isopropylmalate synthase (546 aa).

Positions 8 to 271 constitute a Pyruvate carboxyltransferase domain; that stretch reads ILIFDTTLRD…NSFFKRNPDS (264 aa). Residues aspartate 17, histidine 208, histidine 210, and asparagine 244 each contribute to the Mn(2+) site. The regulatory domain stretch occupies residues 408–546; sequence QLCLVQVSCG…NKTFLSNPAN (139 aa).

The protein belongs to the alpha-IPM synthase/homocitrate synthase family. LeuA type 1 subfamily. In terms of assembly, homodimer. Mn(2+) is required as a cofactor.

Its subcellular location is the cytoplasm. The enzyme catalyses 3-methyl-2-oxobutanoate + acetyl-CoA + H2O = (2S)-2-isopropylmalate + CoA + H(+). The protein operates within amino-acid biosynthesis; L-leucine biosynthesis; L-leucine from 3-methyl-2-oxobutanoate: step 1/4. Functionally, catalyzes the condensation of the acetyl group of acetyl-CoA with 3-methyl-2-oxobutanoate (2-ketoisovalerate) to form 3-carboxy-3-hydroxy-4-methylpentanoate (2-isopropylmalate). This chain is 2-isopropylmalate synthase, found in Prochlorococcus marinus (strain MIT 9312).